We begin with the raw amino-acid sequence, 280 residues long: Shikimate kinase (280 aa).

74–84 contacts ATP; the sequence is PGGSGLGSSSA.

It belongs to the GHMP kinase family. Archaeal shikimate kinase subfamily.

It localises to the cytoplasm. The catalysed reaction is shikimate + ATP = 3-phosphoshikimate + ADP + H(+). It functions in the pathway metabolic intermediate biosynthesis; chorismate biosynthesis; chorismate from D-erythrose 4-phosphate and phosphoenolpyruvate: step 5/7. This Archaeoglobus fulgidus (strain ATCC 49558 / DSM 4304 / JCM 9628 / NBRC 100126 / VC-16) protein is Shikimate kinase (aroK).